The following is a 396-amino-acid chain: Elongation factor Tu 1 (396 aa).

Residues 10–206 (KPHINVGTIG…VLDSYIPEPQ (197 aa)) form the tr-type G domain. The segment at 19–26 (GHVDHGKT) is G1. A GTP-binding site is contributed by 19-26 (GHVDHGKT). Thr-26 is a binding site for Mg(2+). Residues 60–64 (GITIN) form a G2 region. Positions 81-84 (DCPG) are G3. Residues 81 to 85 (DCPGH) and 136 to 139 (NKAD) contribute to the GTP site. The segment at 136–139 (NKAD) is G4. The G5 stretch occupies residues 174–176 (SAL).

This sequence belongs to the TRAFAC class translation factor GTPase superfamily. Classic translation factor GTPase family. EF-Tu/EF-1A subfamily. In terms of assembly, monomer.

Its subcellular location is the cytoplasm. It carries out the reaction GTP + H2O = GDP + phosphate + H(+). GTP hydrolase that promotes the GTP-dependent binding of aminoacyl-tRNA to the A-site of ribosomes during protein biosynthesis. The protein is Elongation factor Tu 1 of Nitrosomonas eutropha (strain DSM 101675 / C91 / Nm57).